We begin with the raw amino-acid sequence, 256 residues long: Phosphomannomutase (256 aa).

Aspartate 12 serves as the catalytic Nucleophile. 2 residues coordinate Mg(2+): aspartate 12 and aspartate 14. Aspartate 14 acts as the Proton donor/acceptor in catalysis. Residues arginine 21, arginine 123, arginine 134, arginine 141, serine 179, and aspartate 181 each contribute to the alpha-D-mannose 1-phosphate site. Mg(2+) is bound at residue aspartate 209.

It belongs to the eukaryotic PMM family. Homodimer.

It localises to the cytoplasm. It carries out the reaction alpha-D-mannose 1-phosphate = D-mannose 6-phosphate. The protein operates within nucleotide-sugar biosynthesis; GDP-alpha-D-mannose biosynthesis; alpha-D-mannose 1-phosphate from D-fructose 6-phosphate: step 2/2. Its function is as follows. Involved in the synthesis of the GDP-mannose and dolichol-phosphate-mannose required for a number of critical mannosyl transfer reactions. The sequence is that of Phosphomannomutase (SEC53) from Encephalitozoon cuniculi (strain GB-M1) (Microsporidian parasite).